The primary structure comprises 245 residues: Large ribosomal subunit protein uL3 (245 aa).

The residue at position 152 (Gln152) is an N5-methylglutamine. The disordered stretch occupies residues 224–245 (RSKAVQAEAAAPAEAAAPEGDN). Over residues 230 to 245 (AEAAAPAEAAAPEGDN) the composition is skewed to low complexity.

It belongs to the universal ribosomal protein uL3 family. As to quaternary structure, part of the 50S ribosomal subunit. Forms a cluster with proteins L14 and L19. In terms of processing, methylated by PrmB.

Its function is as follows. One of the primary rRNA binding proteins, it binds directly near the 3'-end of the 23S rRNA, where it nucleates assembly of the 50S subunit. The sequence is that of Large ribosomal subunit protein uL3 from Paracoccus denitrificans (strain Pd 1222).